The following is a 406-amino-acid chain: NADH-quinone oxidoreductase subunit D (406 aa).

This sequence belongs to the complex I 49 kDa subunit family. As to quaternary structure, NDH-1 is composed of 14 different subunits. Subunits NuoB, C, D, E, F, and G constitute the peripheral sector of the complex.

It is found in the cell inner membrane. The catalysed reaction is a quinone + NADH + 5 H(+)(in) = a quinol + NAD(+) + 4 H(+)(out). In terms of biological role, NDH-1 shuttles electrons from NADH, via FMN and iron-sulfur (Fe-S) centers, to quinones in the respiratory chain. The immediate electron acceptor for the enzyme in this species is believed to be ubiquinone. Couples the redox reaction to proton translocation (for every two electrons transferred, four hydrogen ions are translocated across the cytoplasmic membrane), and thus conserves the redox energy in a proton gradient. The protein is NADH-quinone oxidoreductase subunit D of Leptospira biflexa serovar Patoc (strain Patoc 1 / Ames).